A 24-amino-acid chain; its full sequence is Brevinin-1 (24 aa).

Cysteine 18 and cysteine 24 are disulfide-bonded.

This sequence belongs to the frog skin active peptide (FSAP) family. Brevinin subfamily. As to expression, expressed by the skin glands.

The protein resides in the secreted. In terms of biological role, shows antibacterial activity against representative Gram-negative and Gram-positive bacterial species, and a very high hemolytic activity. The polypeptide is Brevinin-1 (Pelophylax porosus brevipodus (Nagoya Daruma pond frog)).